The chain runs to 249 residues: ATP synthase subunit a (249 aa).

The next 5 membrane-spanning stretches (helical) occupy residues 33-53 (GQVF…SLLA), 92-112 (VPFI…GALI), 131-151 (INTT…AGFS), 196-216 (LVVA…AMIL), and 217-237 (GLFT…SYIG).

Belongs to the ATPase A chain family. As to quaternary structure, F-type ATPases have 2 components, CF(1) - the catalytic core - and CF(0) - the membrane proton channel. CF(1) has five subunits: alpha(3), beta(3), gamma(1), delta(1), epsilon(1). CF(0) has four main subunits: a, b, b' and c.

The protein resides in the cellular thylakoid membrane. Key component of the proton channel; it plays a direct role in the translocation of protons across the membrane. This is ATP synthase subunit a from Synechococcus elongatus (strain ATCC 33912 / PCC 7942 / FACHB-805) (Anacystis nidulans R2).